The sequence spans 131 residues: Small ribosomal subunit protein uS8 (131 aa).

Belongs to the universal ribosomal protein uS8 family. As to quaternary structure, part of the 30S ribosomal subunit. Contacts proteins S5 and S12.

Functionally, one of the primary rRNA binding proteins, it binds directly to 16S rRNA central domain where it helps coordinate assembly of the platform of the 30S subunit. This Paraburkholderia phymatum (strain DSM 17167 / CIP 108236 / LMG 21445 / STM815) (Burkholderia phymatum) protein is Small ribosomal subunit protein uS8.